The chain runs to 625 residues: Probable inactive receptor kinase At5g16590 (625 aa).

The signal sequence occupies residues methionine 1 to serine 23. LRR repeat units lie at residues lysine 88–threonine 111, leucine 112–leucine 134, asparagine 136–alanine 158, arginine 160–leucine 182, and glutamine 183–proline 204. Residues alanine 246–phenylalanine 266 form a helical membrane-spanning segment. Residues lysine 343–valine 613 form the Protein kinase domain. Serine 345 is subject to Phosphoserine. ATP contacts are provided by residues leucine 349–serine 357 and lysine 371. Residue serine 422 is modified to Phosphoserine. A phosphothreonine mark is found at threonine 442 and threonine 496. The residue at position 517 (serine 517) is a Phosphoserine. Residue threonine 593 is modified to Phosphothreonine. Phosphoserine is present on residues serine 619 and serine 624.

Belongs to the protein kinase superfamily. Ser/Thr protein kinase family.

The protein localises to the cell membrane. Functionally, might be involved in early recognition of growth promoting fungi. Appears to be specific for P.indica. In Arabidopsis thaliana (Mouse-ear cress), this protein is Probable inactive receptor kinase At5g16590.